A 132-amino-acid polypeptide reads, in one-letter code: Small ribosomal subunit protein uS8c (132 aa).

It belongs to the universal ribosomal protein uS8 family. Part of the 30S ribosomal subunit.

Its subcellular location is the plastid. It localises to the chloroplast. In terms of biological role, one of the primary rRNA binding proteins, it binds directly to 16S rRNA central domain where it helps coordinate assembly of the platform of the 30S subunit. This is Small ribosomal subunit protein uS8c (rps8) from Amborella trichopoda.